Reading from the N-terminus, the 298-residue chain is Protein pxr1 (298 aa).

Basic residues predominate over residues 1 to 11; sequence MGLAAPRKRTK. Residues 1–23 are disordered; it reads MGLAAPRKRTKISHDPNNTNWAR. Residues 25–79 form the G-patch domain; sequence TSGFGHKILSSQGWTPGSFLGARDAAHADMFTAASAGHIRVVVKDDTLGLGARAG. Residues 145–274 are disordered; it reads LPERESVQQS…RPLGRQIVRG (130 aa). Residues 151-164 are compositionally biased toward polar residues; sequence VQQSRAAVETSDSN. Over residues 199 to 222 the composition is skewed to basic residues; the sequence is REKKEKKDKKEKKEKKDKKDKKRK. A compositionally biased stretch (polar residues) spans 247 to 256; that stretch reads GLESDSTSVS.

The protein belongs to the PINX1 family.

The protein localises to the nucleus. The protein resides in the nucleolus. Involved in rRNA-processing at A0, A1 and A2 sites and negatively regulates telomerase. In Aspergillus terreus (strain NIH 2624 / FGSC A1156), this protein is Protein pxr1 (pxr1).